Consider the following 348-residue polypeptide: Ion-translocating oxidoreductase complex subunit D (348 aa).

Helical transmembrane passes span 25-45 (ILAALPGLAVQCYFFGWGTFI), 68-88 (PISPTLMDQSAVLTALLIGVA), and 124-144 (AMAAYVLLLVSFPVLMTTWAA). Thr-182 is subject to FMN phosphoryl threonine. Transmembrane regions (helical) follow at residues 211–231 (TGEGWFWVNLAYLCGGLFLLA), 237–257 (WHISGGLIGALFVCSLFGFGA), 263–283 (ASPLFNLFSGATMLAAFFIAT), 296–316 (LLFGAMIGVLIYLIRTFGGYP), and 317–337 (DGVAFAVLLANLCAPLIDYYI).

It belongs to the NqrB/RnfD family. As to quaternary structure, the complex is composed of six subunits: RnfA, RnfB, RnfC, RnfD, RnfE and RnfG. FMN serves as cofactor.

It localises to the cell inner membrane. Part of a membrane-bound complex that couples electron transfer with translocation of ions across the membrane. The chain is Ion-translocating oxidoreductase complex subunit D from Shewanella amazonensis (strain ATCC BAA-1098 / SB2B).